Reading from the N-terminus, the 178-residue chain is Large ribosomal subunit protein bL25 (178 aa).

This sequence belongs to the bacterial ribosomal protein bL25 family. CTC subfamily. Part of the 50S ribosomal subunit; part of the 5S rRNA/L5/L18/L25 subcomplex. Contacts the 5S rRNA. Binds to the 5S rRNA independently of L5 and L18.

In terms of biological role, this is one of the proteins that binds to the 5S RNA in the ribosome where it forms part of the central protuberance. The chain is Large ribosomal subunit protein bL25 from Campylobacter jejuni subsp. jejuni serotype O:23/36 (strain 81-176).